Consider the following 314-residue polypeptide: Probable UDP-sugar transporter protein SLC35A4 (314 aa).

Over 1 to 20 (MIAISADESPESSSPALRLR) the chain is Cytoplasmic. A helical transmembrane segment spans residues 21–41 (WLFLLLLLVLIYGSHAPLLSL). Residues 42 to 54 (CKTQAQIPFSASS) lie on the Lumenal side of the membrane. Residues 55–75 (CVLLIETSKLFISFASLLASG) form a helical membrane-spanning segment. Residues 76–88 (SVSTLRISISMTT) lie on the Cytoplasmic side of the membrane. Residues 89–109 (ASPYAVPAVLYAFNNHLVVFM) form a helical membrane-spanning segment. Residues 110–145 (QAYMDPSSFQVLSNLKIASTALLYTSCLGKRLHRRQ) lie on the Lumenal side of the membrane. Residues 146 to 166 (WFAMGLLVSAGVSHSCFSYDL) traverse the membrane as a helical segment. The Cytoplasmic segment spans residues 167–175 (EGKRETAVY). A helical transmembrane segment spans residues 176–196 (ITSWGLLLVLVYCFVSGLAAV). At 197–206 (YTERVLKSQR) the chain is on the lumenal side. A helical membrane pass occupies residues 207–227 (LPLSMQNLFLYTFGVVVNLAS). Residues 228–242 (HLSGGEQKGFFEGYS) lie on the Cytoplasmic side of the membrane. A helical membrane pass occupies residues 243–263 (AVVWVIVAGQVANGLLMSVVM). Residues 264-267 (KHGT) are Lumenal-facing. Residues 268-290 (GITRLFVISSAMLVNAVLSWGIL) form a helical membrane-spanning segment. The Cytoplasmic segment spans residues 291–314 (GVQLTGYFLFPVVLIGWAVYLYYT).

The protein belongs to the nucleotide-sugar transporter family. SLC35A subfamily.

Its subcellular location is the golgi apparatus membrane. The catalysed reaction is CDP-L-ribitol(in) + CDP(out) = CDP-L-ribitol(out) + CDP(in). Functionally, mediates the transport of CDP-ribitol. Does not exhibit CMP-sialic acid, UDP-galactose and UDP-N-acetylglucosamine transport activity. The sequence is that of Probable UDP-sugar transporter protein SLC35A4 from Danio rerio (Zebrafish).